Here is a 215-residue protein sequence, read N- to C-terminus: Peptide methionine sulfoxide reductase MsrA (215 aa).

C58 is a catalytic residue.

The protein belongs to the MsrA Met sulfoxide reductase family.

It catalyses the reaction L-methionyl-[protein] + [thioredoxin]-disulfide + H2O = L-methionyl-(S)-S-oxide-[protein] + [thioredoxin]-dithiol. The catalysed reaction is [thioredoxin]-disulfide + L-methionine + H2O = L-methionine (S)-S-oxide + [thioredoxin]-dithiol. Its function is as follows. Has an important function as a repair enzyme for proteins that have been inactivated by oxidation. Catalyzes the reversible oxidation-reduction of methionine sulfoxide in proteins to methionine. This is Peptide methionine sulfoxide reductase MsrA from Pseudomonas aeruginosa (strain UCBPP-PA14).